The chain runs to 378 residues: D-alanine--D-alanine ligase (378 aa).

The region spanning 141 to 347 (KKLLTLNGIR…YSELIDQLIQ (207 aa)) is the ATP-grasp domain. 171–226 (AEELGETLFVKPARQGSSVGIHKVRNEEEYNAALEDGFKYDYKILVEEAIKNPREV) is a binding site for ATP. Positions 301, 314, and 316 each coordinate Mg(2+).

Belongs to the D-alanine--D-alanine ligase family. The cofactor is Mg(2+). Mn(2+) is required as a cofactor.

The protein localises to the cytoplasm. The catalysed reaction is 2 D-alanine + ATP = D-alanyl-D-alanine + ADP + phosphate + H(+). Its pathway is cell wall biogenesis; peptidoglycan biosynthesis. In terms of biological role, cell wall formation. This chain is D-alanine--D-alanine ligase, found in Ligilactobacillus salivarius (strain UCC118) (Lactobacillus salivarius).